The primary structure comprises 69 residues: DNA-directed RNA polymerase subunit omega (69 aa).

It belongs to the RNA polymerase subunit omega family. In terms of assembly, the RNAP catalytic core consists of 2 alpha, 1 beta, 1 beta' and 1 omega subunit. When a sigma factor is associated with the core the holoenzyme is formed, which can initiate transcription.

The enzyme catalyses RNA(n) + a ribonucleoside 5'-triphosphate = RNA(n+1) + diphosphate. Its function is as follows. Promotes RNA polymerase assembly. Latches the N- and C-terminal regions of the beta' subunit thereby facilitating its interaction with the beta and alpha subunits. This chain is DNA-directed RNA polymerase subunit omega, found in Heliobacterium modesticaldum (strain ATCC 51547 / Ice1).